The chain runs to 224 residues: Phosphoribosylformylglycinamidine synthase subunit PurQ (224 aa).

A Glutamine amidotransferase type-1 domain is found at 2–224 (KFAVIQFPGS…SILNHAEVKA (223 aa)). Cysteine 86 functions as the Nucleophile in the catalytic mechanism. Active-site residues include histidine 195 and glutamate 197.

As to quaternary structure, part of the FGAM synthase complex composed of 1 PurL, 1 PurQ and 2 PurS subunits.

It localises to the cytoplasm. It carries out the reaction N(2)-formyl-N(1)-(5-phospho-beta-D-ribosyl)glycinamide + L-glutamine + ATP + H2O = 2-formamido-N(1)-(5-O-phospho-beta-D-ribosyl)acetamidine + L-glutamate + ADP + phosphate + H(+). It catalyses the reaction L-glutamine + H2O = L-glutamate + NH4(+). The protein operates within purine metabolism; IMP biosynthesis via de novo pathway; 5-amino-1-(5-phospho-D-ribosyl)imidazole from N(2)-formyl-N(1)-(5-phospho-D-ribosyl)glycinamide: step 1/2. Part of the phosphoribosylformylglycinamidine synthase complex involved in the purines biosynthetic pathway. Catalyzes the ATP-dependent conversion of formylglycinamide ribonucleotide (FGAR) and glutamine to yield formylglycinamidine ribonucleotide (FGAM) and glutamate. The FGAM synthase complex is composed of three subunits. PurQ produces an ammonia molecule by converting glutamine to glutamate. PurL transfers the ammonia molecule to FGAR to form FGAM in an ATP-dependent manner. PurS interacts with PurQ and PurL and is thought to assist in the transfer of the ammonia molecule from PurQ to PurL. This chain is Phosphoribosylformylglycinamidine synthase subunit PurQ, found in Lactobacillus delbrueckii subsp. bulgaricus (strain ATCC 11842 / DSM 20081 / BCRC 10696 / JCM 1002 / NBRC 13953 / NCIMB 11778 / NCTC 12712 / WDCM 00102 / Lb 14).